The following is a 662-amino-acid chain: DNA ligase (662 aa).

Residues 31–35 (DKDYD) and 79–80 (SL) each bind NAD(+). Lys121 functions as the N6-AMP-lysine intermediate in the catalytic mechanism. Arg143, Glu177, and Lys313 together coordinate NAD(+). Residues Cys406, Cys409, Cys422, and Cys428 each coordinate Zn(2+). The 77-residue stretch at 586-662 (VLESPFMGKT…LSEEEFENMI (77 aa)) folds into the BRCT domain.

It belongs to the NAD-dependent DNA ligase family. LigA subfamily. Mg(2+) is required as a cofactor. The cofactor is Mn(2+).

It carries out the reaction NAD(+) + (deoxyribonucleotide)n-3'-hydroxyl + 5'-phospho-(deoxyribonucleotide)m = (deoxyribonucleotide)n+m + AMP + beta-nicotinamide D-nucleotide.. Functionally, DNA ligase that catalyzes the formation of phosphodiester linkages between 5'-phosphoryl and 3'-hydroxyl groups in double-stranded DNA using NAD as a coenzyme and as the energy source for the reaction. It is essential for DNA replication and repair of damaged DNA. This is DNA ligase from Clostridium perfringens (strain ATCC 13124 / DSM 756 / JCM 1290 / NCIMB 6125 / NCTC 8237 / Type A).